A 127-amino-acid chain; its full sequence is Mating pheromone 4 (127 aa).

An N-terminal signal peptide occupies residues 1–16 (MKAIFIILAILMVTQA). A propeptide spanning residues 17–42 (FKMTSKVKSMNMSRNMSKNTSTLGTK) is cleaved from the precursor.

It is found in the secreted. Functionally, mating ciliate pheromones (or gamones) are diffusible extracellular communication signals that distinguish different intraspecific classes of cells commonly referred to as 'mating types'. They prepare the latter for conjugation by changing their cell surface properties. This Euplotoides octocarinatus (Freshwater ciliate) protein is Mating pheromone 4 (PHR4).